Here is a 375-residue protein sequence, read N- to C-terminus: Digeranylgeranylglycerophospholipid reductase 1 (375 aa).

FAD-binding residues include Ala13, Glu32, Cys43, Ala44, Gly46, Arg92, Ala116, Asp275, Gly287, and Leu288. Gly367 lines the a 2,3-bis-O-(geranylgeranyl)-sn-glycerol 1-phospholipid pocket.

Belongs to the geranylgeranyl reductase family. DGGGPL reductase subfamily. Requires FAD as cofactor.

The enzyme catalyses a 2,3-bis-O-phytanyl-sn-glycerol 1-phospholipid + 8 A = a 2,3-bis-O-(geranylgeranyl)-sn-glycerol 1-phospholipid + 8 AH2. It carries out the reaction 2,3-bis-O-(phytanyl)-sn-glycerol 1-phosphate + 8 A = 2,3-bis-O-(geranylgeranyl)-sn-glycerol 1-phosphate + 8 AH2. It catalyses the reaction CDP-2,3-bis-O-(geranylgeranyl)-sn-glycerol + 8 AH2 = CDP-2,3-bis-O-(phytanyl)-sn-glycerol + 8 A. The catalysed reaction is archaetidylserine + 8 AH2 = 2,3-bis-O-phytanyl-sn-glycero-3-phospho-L-serine + 8 A. It participates in membrane lipid metabolism; glycerophospholipid metabolism. Functionally, is involved in the reduction of 2,3-digeranylgeranylglycerophospholipids (unsaturated archaeols) into 2,3-diphytanylglycerophospholipids (saturated archaeols) in the biosynthesis of archaeal membrane lipids. Catalyzes the formation of archaetidic acid (2,3-di-O-phytanyl-sn-glyceryl phosphate) from 2,3-di-O-geranylgeranylglyceryl phosphate (DGGGP) via the hydrogenation of each double bond of the isoprenoid chains. Is also probably able to reduce double bonds of geranyl groups in CDP-2,3-bis-O-(geranylgeranyl)-sn-glycerol and archaetidylserine, thus acting at various stages in the biosynthesis of archaeal membrane lipids. This chain is Digeranylgeranylglycerophospholipid reductase 1, found in Methanopyrus kandleri (strain AV19 / DSM 6324 / JCM 9639 / NBRC 100938).